A 256-amino-acid polypeptide reads, in one-letter code: MNNDVFPNKFKAALAAKQVQIGCWSALSNPISTEVLGLAGFDWLVLDGEHAPNDISTFIPQLMALKGSASAPVVRVPTNEPVIIKRLLDIGFYNFLIPFVETKEEAEQAVASTRYPPEGIRGVSVSHRANMFGTVADYFAQSNKNITILVQIESQQGVDNVDAIAATEGVDGIFVGPSDLAAALGHLGNASHPDVQKAIQHIFNRASAHGKPSGILAPVEADARRYLAWGATFVAVGSDLGVFRSATQKLADTFKK.

H50 (proton acceptor) is an active-site residue. Residue Q151 coordinates substrate. Residue E153 coordinates Mg(2+). S178 and D179 together coordinate substrate. Position 179 (D179) interacts with Mg(2+).

Belongs to the HpcH/HpaI aldolase family. KDGluc aldolase subfamily. In terms of assembly, homohexamer; trimer of dimers. The cofactor is Mg(2+).

It catalyses the reaction 5-dehydro-4-deoxy-D-glucarate = 2-hydroxy-3-oxopropanoate + pyruvate. The catalysed reaction is 2-dehydro-3-deoxy-D-glucarate = 2-hydroxy-3-oxopropanoate + pyruvate. The protein operates within carbohydrate acid metabolism; galactarate degradation; D-glycerate from galactarate: step 2/3. Its function is as follows. Catalyzes the reversible retro-aldol cleavage of both 5-keto-4-deoxy-D-glucarate and 2-keto-3-deoxy-D-glucarate to pyruvate and tartronic semialdehyde. The sequence is that of 5-keto-4-deoxy-D-glucarate aldolase from Shigella dysenteriae serotype 1 (strain Sd197).